The primary structure comprises 258 residues: MSDLKAAALRALKLMDLTTLNDDDTDAKVISLCHDAKTAVGNTAAICIYPRFIPIAKKTLREQGTPEVRIATVTNFPHGNDDIDIAVAETKAAVAYGADEVDVVFPYRALMAGDEKVGFELVKQCKEACGDILLKVIIETGELKEEALIKKASQICIEAGADFIKTSTGKVPVNATPEYARMMLEVIRDMGVAETVGFKPAGGVRTAEDAAAYLAMADEILGDNWVDARHYRFGASSLLTNLLNTLEVSDDVADPTAY.

The active-site Proton donor/acceptor is Asp-102. The Schiff-base intermediate with acetaldehyde role is filled by Lys-165. The active-site Proton donor/acceptor is Lys-199.

This sequence belongs to the DeoC/FbaB aldolase family. DeoC type 2 subfamily.

Its subcellular location is the cytoplasm. It carries out the reaction 2-deoxy-D-ribose 5-phosphate = D-glyceraldehyde 3-phosphate + acetaldehyde. It participates in carbohydrate degradation; 2-deoxy-D-ribose 1-phosphate degradation; D-glyceraldehyde 3-phosphate and acetaldehyde from 2-deoxy-alpha-D-ribose 1-phosphate: step 2/2. Its function is as follows. Catalyzes a reversible aldol reaction between acetaldehyde and D-glyceraldehyde 3-phosphate to generate 2-deoxy-D-ribose 5-phosphate. This Vibrio parahaemolyticus serotype O3:K6 (strain RIMD 2210633) protein is Deoxyribose-phosphate aldolase.